Reading from the N-terminus, the 282-residue chain is HTH-type transcriptional activator RhaR (282 aa).

The region spanning 179–277 (DKLITRLAAS…GMTPSQWRHL (99 aa)) is the HTH araC/xylS-type domain. DNA-binding regions (H-T-H motif) lie at residues 196-217 (DKFC…RQQT) and 244-267 (ISDI…TRET).

As to quaternary structure, binds DNA as a dimer.

The protein localises to the cytoplasm. Activates expression of the rhaSR operon in response to L-rhamnose. In Shigella dysenteriae serotype 1 (strain Sd197), this protein is HTH-type transcriptional activator RhaR.